Here is a 178-residue protein sequence, read N- to C-terminus: Ribosome maturation factor RimP (178 aa).

Belongs to the RimP family.

It is found in the cytoplasm. Required for maturation of 30S ribosomal subunits. This Streptococcus pyogenes serotype M18 (strain MGAS8232) protein is Ribosome maturation factor RimP.